The chain runs to 363 residues: Adenosine deaminase (363 aa).

Zn(2+) is bound by residues histidine 42 and histidine 44. A purine D-ribonucleoside-binding positions include 44–46 (HLD), aspartate 172, and glycine 201. The gating helix loop; regulates binding affinity for substrates and thus substrate selectivity stretch occupies residues 170-184 (IGDTGHEAANIKASA). Zn(2+) is bound at residue histidine 226. Residues glutamate 229, histidine 253, and aspartate 310 each coordinate a purine D-ribonucleoside. Residue aspartate 310 participates in Zn(2+) binding.

This sequence belongs to the metallo-dependent hydrolases superfamily. Adenosine and AMP deaminases family. The cofactor is Zn(2+).

The enzyme catalyses adenosine + H2O + H(+) = inosine + NH4(+). It carries out the reaction S-methyl-5'-thioadenosine + H2O + H(+) = S-methyl-5'-thioinosine + NH4(+). Its pathway is purine metabolism; purine nucleoside salvage. With respect to regulation, inhibited by coformycin and methylthiocoformycin (MT-coformycin). Catalyzes the hydrolytic deamination of adenosine to produce inosine. Unlike mammalian adenosine deaminases, also catalyzes the deamination of 5'-methylthioadenosine (MTA), a by-product of polyamine biosynthesis, to produce 5'-methylthioinosine (MTI). Plays an essential role in the purine salvage pathway which allows the parasite to use host cell purines for the synthesis of nucleic acids. The protein is Adenosine deaminase of Plasmodium cynomolgi (strain B).